The following is a 137-amino-acid chain: Peptide methionine sulfoxide reductase MsrB (137 aa).

The MsrB domain occupies 9 to 131 (DAEWRAMLDD…NSASLRFDAT (123 aa)). Residues cysteine 48, cysteine 51, cysteine 97, and cysteine 100 each coordinate Zn(2+). The Nucleophile role is filled by cysteine 120.

Belongs to the MsrB Met sulfoxide reductase family. The cofactor is Zn(2+).

It catalyses the reaction L-methionyl-[protein] + [thioredoxin]-disulfide + H2O = L-methionyl-(R)-S-oxide-[protein] + [thioredoxin]-dithiol. The polypeptide is Peptide methionine sulfoxide reductase MsrB (Herminiimonas arsenicoxydans).